Reading from the N-terminus, the 219-residue chain is FMN-dependent NADH:quinone oxidoreductase 2 (219 aa).

FMN contacts are provided by residues serine 10 and 23–25 (SIS).

Belongs to the azoreductase type 1 family. As to quaternary structure, homodimer. FMN is required as a cofactor.

It catalyses the reaction 2 a quinone + NADH + H(+) = 2 a 1,4-benzosemiquinone + NAD(+). It carries out the reaction N,N-dimethyl-1,4-phenylenediamine + anthranilate + 2 NAD(+) = 2-(4-dimethylaminophenyl)diazenylbenzoate + 2 NADH + 2 H(+). Functionally, quinone reductase that provides resistance to thiol-specific stress caused by electrophilic quinones. Its function is as follows. Also exhibits azoreductase activity. Catalyzes the reductive cleavage of the azo bond in aromatic azo compounds to the corresponding amines. The protein is FMN-dependent NADH:quinone oxidoreductase 2 of Colwellia psychrerythraea (strain 34H / ATCC BAA-681) (Vibrio psychroerythus).